A 404-amino-acid chain; its full sequence is Tryptophan synthase beta chain (404 aa).

Residue K94 is modified to N6-(pyridoxal phosphate)lysine.

Belongs to the TrpB family. In terms of assembly, tetramer of two alpha and two beta chains. It depends on pyridoxal 5'-phosphate as a cofactor.

It carries out the reaction (1S,2R)-1-C-(indol-3-yl)glycerol 3-phosphate + L-serine = D-glyceraldehyde 3-phosphate + L-tryptophan + H2O. Its pathway is amino-acid biosynthesis; L-tryptophan biosynthesis; L-tryptophan from chorismate: step 5/5. In terms of biological role, the beta subunit is responsible for the synthesis of L-tryptophan from indole and L-serine. This is Tryptophan synthase beta chain from Staphylococcus aureus (strain MRSA252).